We begin with the raw amino-acid sequence, 137 residues long: uncharacterized protein (137 aa).

4 helical membrane-spanning segments follow: residues 14 to 34, 48 to 68, 84 to 104, and 109 to 129; these read AVVV…GSIS, YHII…SLSI, FFTI…LGLT, and HIPS…LNLF.

It is found in the cell membrane. This is an uncharacterized protein from Methanocaldococcus jannaschii (strain ATCC 43067 / DSM 2661 / JAL-1 / JCM 10045 / NBRC 100440) (Methanococcus jannaschii).